The primary structure comprises 41 residues: Hadrurin (41 aa).

The protein belongs to the non-disulfide-bridged peptide (NDBP) superfamily. Long chain multifunctional peptide (group 2) family. Expressed by the venom gland.

Its subcellular location is the secreted. In terms of biological role, antimicrobial activity against S.typhimurium, K.pneumoniae, E.cloacae, P.aeruginosa, E.coli and S.marcescens. Also shows hemolytic activity when tested in human erythrocytes. The protein is Hadrurin of Hoffmannihadrurus aztecus (Mexican scorpion).